A 342-amino-acid polypeptide reads, in one-letter code: Glyceraldehyde-3-phosphate dehydrogenase (342 aa).

Residues 12 to 13 (RI), D34, K78, and T120 contribute to the NAD(+) site. D-glyceraldehyde 3-phosphate is bound by residues 151–153 (SCT) and T182. Residue C152 is the Nucleophile of the active site. N183 contributes to the NAD(+) binding site. Residues R197, 210–211 (TG), and R233 contribute to the D-glyceraldehyde 3-phosphate site. Position 322 (N322) interacts with NAD(+).

The protein belongs to the glyceraldehyde-3-phosphate dehydrogenase family. As to quaternary structure, homotetramer.

It is found in the cytoplasm. It catalyses the reaction D-glyceraldehyde 3-phosphate + phosphate + NAD(+) = (2R)-3-phospho-glyceroyl phosphate + NADH + H(+). It functions in the pathway carbohydrate degradation; glycolysis; pyruvate from D-glyceraldehyde 3-phosphate: step 1/5. Catalyzes the oxidative phosphorylation of glyceraldehyde 3-phosphate (G3P) to 1,3-bisphosphoglycerate (BPG) using the cofactor NAD. The first reaction step involves the formation of a hemiacetal intermediate between G3P and a cysteine residue, and this hemiacetal intermediate is then oxidized to a thioester, with concomitant reduction of NAD to NADH. The reduced NADH is then exchanged with the second NAD, and the thioester is attacked by a nucleophilic inorganic phosphate to produce BPG. This chain is Glyceraldehyde-3-phosphate dehydrogenase (gap), found in Aquifex aeolicus (strain VF5).